The chain runs to 161 residues: Allophycocyanin alpha chain (161 aa).

At Asn71 the chain carries N4-methylasparagine. Cys81 contacts (2R,3E)-phycocyanobilin.

Belongs to the phycobiliprotein family. In terms of assembly, heterodimer of an alpha and a beta chain. In terms of processing, contains one covalently linked phycocyanobilin chromophore.

Its subcellular location is the plastid. It is found in the chloroplast thylakoid membrane. Its function is as follows. Light-harvesting photosynthetic bile pigment-protein from the phycobiliprotein complex. Allophycocyanin has a maximum absorption at approximately 650 nanometers. The sequence is that of Allophycocyanin alpha chain (apcA) from Pyropia haitanensis (Red seaweed).